Consider the following 219-residue polypeptide: Probable 3-beta-hydroxysteroid-Delta(8),Delta(7)-isomerase (219 aa).

A run of 4 helical transmembrane segments spans residues 29-49 (ILVP…LISG), 62-82 (LMCW…TFVF), 119-139 (VEGI…YAIA), and 181-201 (FWAY…MIAI). The EXPERA domain maps to 58–200 (TDRWLMCWWA…SWVVIPTMIA (143 aa)).

Belongs to the EBP family.

The protein resides in the endoplasmic reticulum membrane. It carries out the reaction lathosterol = 5alpha-cholest-8-en-3beta-ol. It participates in steroid biosynthesis; sterol biosynthesis. Catalyzes the conversion of Delta(8)-sterols to their corresponding Delta(7)-isomers. This Oryza sativa subsp. japonica (Rice) protein is Probable 3-beta-hydroxysteroid-Delta(8),Delta(7)-isomerase.